The sequence spans 127 residues: Small ribosomal subunit protein uS11 (127 aa).

The protein belongs to the universal ribosomal protein uS11 family. Part of the 30S ribosomal subunit.

Functionally, located on the platform of the 30S subunit. This is Small ribosomal subunit protein uS11 from Natronomonas pharaonis (strain ATCC 35678 / DSM 2160 / CIP 103997 / JCM 8858 / NBRC 14720 / NCIMB 2260 / Gabara) (Halobacterium pharaonis).